The chain runs to 628 residues: uncharacterized protein (628 aa).

Disordered regions lie at residues Met1–Ala65 and Ser80–Ser125. Residues Ile12 to Pro21 show a composition bias toward low complexity. Over residues Pro25–Glu37 the composition is skewed to polar residues. Low complexity-rich tracts occupy residues Ser48–Ser64 and Ser87–Ser102. The segment covering Asp103 to Ser116 has biased composition (basic and acidic residues). 12 helical membrane passes run Ile157–Leu177, Val203–Met223, Leu230–Gly250, Phe259–Phe279, Ile294–Ala314, Leu324–Phe344, Leu417–Tyr437, Val454–Pro474, Met483–Val503, Val511–Val531, Val542–Ala562, and Met583–Phe603.

This sequence belongs to the major facilitator superfamily. Allantoate permease family.

The protein resides in the membrane. This is an uncharacterized protein from Schizosaccharomyces pombe (strain 972 / ATCC 24843) (Fission yeast).